A 171-amino-acid chain; its full sequence is MKKIGIFFGSDTGNTEKIAKLIQKYIGDNVSCLYDISNTSQKDIEDFNFLIFGVPTWYYGEVQCDWDDFLPTLKKINFSNKIVALFGCGDQEDYSEYFCDAIGTIYDILKKNKANIIGKWSTEDYYFEQSKALLNKKYFYGLILDEDRQANKTEYRIKQWVKQIIPYFNTH.

Residues 4-165 form the Flavodoxin-like domain; sequence IGIFFGSDTG…RIKQWVKQII (162 aa).

It belongs to the flavodoxin family. Requires FMN as cofactor.

Functionally, low-potential electron donor to a number of redox enzymes. This chain is Flavodoxin (fldA), found in Buchnera aphidicola subsp. Acyrthosiphon pisum (strain APS) (Acyrthosiphon pisum symbiotic bacterium).